Reading from the N-terminus, the 184-residue chain is Ribosome-recycling factor (184 aa).

Belongs to the RRF family.

The protein localises to the cytoplasm. Responsible for the release of ribosomes from messenger RNA at the termination of protein biosynthesis. May increase the efficiency of translation by recycling ribosomes from one round of translation to another. The protein is Ribosome-recycling factor of Mycoplasma pneumoniae (strain ATCC 29342 / M129 / Subtype 1) (Mycoplasmoides pneumoniae).